Consider the following 364-residue polypeptide: Paraneoplastic antigen Ma2 homolog (364 aa).

Ala2 bears the N-acetylalanine mark. Positions 335–351 are enriched in acidic residues; it reads EEEEATFENENTEEPEG. Residues 335 to 364 are disordered; the sequence is EEEEATFENENTEEPEGGDGYGHWGNEAND.

The protein belongs to the PNMA family.

The protein localises to the nucleus. It is found in the nucleolus. This Bos taurus (Bovine) protein is Paraneoplastic antigen Ma2 homolog (PNMA2).